A 478-amino-acid polypeptide reads, in one-letter code: Trigger factor (478 aa).

A PPIase FKBP-type domain is found at G162–P243. A disordered region spans residues K424–K478. Positions E448 to K478 are enriched in acidic residues.

This sequence belongs to the FKBP-type PPIase family. Tig subfamily.

It is found in the cytoplasm. The enzyme catalyses [protein]-peptidylproline (omega=180) = [protein]-peptidylproline (omega=0). In terms of biological role, involved in protein export. Acts as a chaperone by maintaining the newly synthesized protein in an open conformation. Functions as a peptidyl-prolyl cis-trans isomerase. This is Trigger factor from Mycobacterium sp. (strain KMS).